A 380-amino-acid chain; its full sequence is MDPNLRKSHPLLKMINNSLIDLPTPSNISAWWNFGSLLGTCLATQIITGLLLAMHYTADTTVAFSSVAHTCRNVQYGWLIRNLHANGASFFFICIYLHIGRGFYYGSYLYQETWNTGVVLLLTLMATAFVGYVLPWGQMSFWGATVITNLFSAIPYIGQTLVEWAWGGFSVDNPTLTGFFALHFLLPFLIAGLTLIHLTLLHESGSNNPLGIVSNCDKIPFHPYFSTKDLLGFIIMLTPLMTLALFSPNLLGDPKNFTPANPLVTPPHIKPEWYFLFAYAILRSIPNQLGGVLALTASVLVLFLSPFLHKSKQRTMTFRPLSQILFWTLVANLLILTWVGSQPVEHPFIIIGQLASLTYFTILLILFPLIGALEYKMLNY.

The next 4 membrane-spanning stretches (helical) occupy residues 34 to 54, 78 to 99, 114 to 134, and 179 to 199; these read FGSL…LLAM, WLIR…YLHI, WNTG…GYVL, and FFAL…IHLT. Histidine 84 and histidine 98 together coordinate heme b. 2 residues coordinate heme b: histidine 183 and histidine 197. Residue histidine 202 coordinates a ubiquinone. The next 4 helical transmembrane spans lie at 227-247, 289-309, 321-341, and 348-368; these read TKDL…ALFS, LGGV…PFLH, LSQI…WVGS, and FIII…ILFP.

The protein belongs to the cytochrome b family. In terms of assembly, the cytochrome bc1 complex contains 11 subunits: 3 respiratory subunits (MT-CYB, CYC1 and UQCRFS1), 2 core proteins (UQCRC1 and UQCRC2) and 6 low-molecular weight proteins (UQCRH/QCR6, UQCRB/QCR7, UQCRQ/QCR8, UQCR10/QCR9, UQCR11/QCR10 and a cleavage product of UQCRFS1). This cytochrome bc1 complex then forms a dimer. Heme b is required as a cofactor.

The protein resides in the mitochondrion inner membrane. Functionally, component of the ubiquinol-cytochrome c reductase complex (complex III or cytochrome b-c1 complex) that is part of the mitochondrial respiratory chain. The b-c1 complex mediates electron transfer from ubiquinol to cytochrome c. Contributes to the generation of a proton gradient across the mitochondrial membrane that is then used for ATP synthesis. This is Cytochrome b (MT-CYB) from Aerodramus vulcanorum (Volcano swiftlet).